The primary structure comprises 259 residues: Phosphatidylglycerol--prolipoprotein diacylglyceryl transferase (259 aa).

The next 4 helical transmembrane spans lie at 16 to 36 (FAISWYSLSYVIGILLGWFYA), 55 to 75 (FITYAVIGIIVGGRLGFVLLY), 92 to 112 (QGGMSFHGGALGVIIAAYLFC), and 117 to 137 (VNFLSLTDIIATVVPIGLFLG). Residue Arg-138 participates in a 1,2-diacyl-sn-glycero-3-phospho-(1'-sn-glycerol) binding. Helical transmembrane passes span 172 to 192 (QLYEAFFEGLVLFCILAYATF), 201 to 221 (ALNLGLFLTFYALFRITIEIF), and 228 to 248 (IGFILDSLTMGQILSIPMLIL).

It belongs to the Lgt family.

The protein localises to the cell inner membrane. The enzyme catalyses L-cysteinyl-[prolipoprotein] + a 1,2-diacyl-sn-glycero-3-phospho-(1'-sn-glycerol) = an S-1,2-diacyl-sn-glyceryl-L-cysteinyl-[prolipoprotein] + sn-glycerol 1-phosphate + H(+). The protein operates within protein modification; lipoprotein biosynthesis (diacylglyceryl transfer). Its function is as follows. Catalyzes the transfer of the diacylglyceryl group from phosphatidylglycerol to the sulfhydryl group of the N-terminal cysteine of a prolipoprotein, the first step in the formation of mature lipoproteins. This is Phosphatidylglycerol--prolipoprotein diacylglyceryl transferase from Rickettsia canadensis (strain McKiel).